The primary structure comprises 241 residues: Orotidine 5'-phosphate decarboxylase (241 aa).

Substrate-binding positions include aspartate 19, lysine 41, 69 to 78 (DLKFFDIPAT), threonine 124, arginine 185, glutamine 194, glycine 214, and arginine 215. Lysine 71 (proton donor) is an active-site residue.

It belongs to the OMP decarboxylase family. Type 1 subfamily. In terms of assembly, homodimer.

It catalyses the reaction orotidine 5'-phosphate + H(+) = UMP + CO2. It participates in pyrimidine metabolism; UMP biosynthesis via de novo pathway; UMP from orotate: step 2/2. Its function is as follows. Catalyzes the decarboxylation of orotidine 5'-monophosphate (OMP) to uridine 5'-monophosphate (UMP). In Stenotrophomonas maltophilia (strain K279a), this protein is Orotidine 5'-phosphate decarboxylase.